The following is a 463-amino-acid chain: Cysteine--tRNA ligase (463 aa).

Cys33 contributes to the Zn(2+) binding site. The short motif at 35–45 is the 'HIGH' region element; it reads PTVYDFAHIGN. Residues Cys221, His246, and Glu250 each coordinate Zn(2+). The short motif at 279-283 is the 'KMSKS' region element; that stretch reads KMSKS. An ATP-binding site is contributed by Lys282.

The protein belongs to the class-I aminoacyl-tRNA synthetase family. In terms of assembly, monomer. Zn(2+) is required as a cofactor.

It is found in the cytoplasm. It catalyses the reaction tRNA(Cys) + L-cysteine + ATP = L-cysteinyl-tRNA(Cys) + AMP + diphosphate. The polypeptide is Cysteine--tRNA ligase (Rhizobium johnstonii (strain DSM 114642 / LMG 32736 / 3841) (Rhizobium leguminosarum bv. viciae)).